Consider the following 536-residue polypeptide: Anthranilate synthase component 1 2 (536 aa).

Residues serine 59 and 299-301 (PYM) contribute to the L-tryptophan site. 334-335 (GT) provides a ligand contact to chorismate. Glutamate 361 is a Mg(2+) binding site. Chorismate-binding positions include tyrosine 449, arginine 469, 487 to 489 (GAG), and glycine 489. Glutamate 502 contributes to the Mg(2+) binding site.

It belongs to the anthranilate synthase component I family. As to quaternary structure, tetramer of two components I and two components II. It depends on Mg(2+) as a cofactor.

It carries out the reaction chorismate + L-glutamine = anthranilate + pyruvate + L-glutamate + H(+). The protein operates within amino-acid biosynthesis; L-tryptophan biosynthesis; L-tryptophan from chorismate: step 1/5. The protein is Anthranilate synthase component 1 2 (trpE2) of Haloarcula marismortui (strain ATCC 43049 / DSM 3752 / JCM 8966 / VKM B-1809) (Halobacterium marismortui).